The chain runs to 128 residues: Putative transmembrane protein 244 (128 aa).

3 helical membrane-spanning segments follow: residues Phe17–Val37, Val65–Val85, and Ala93–Leu113.

The protein resides in the membrane. The protein is Putative transmembrane protein 244 (TMEM244) of Homo sapiens (Human).